The following is a 198-amino-acid chain: Probable GTP-binding protein EngB (198 aa).

The EngB-type G domain occupies 22 to 195; sequence DLPEIALAGR…WKAIHKMTKT (174 aa). GTP contacts are provided by residues 30 to 37, 57 to 61, 75 to 78, 142 to 145, and 174 to 176; these read GRSNVGKS, GKTQT, DVPG, TKAD, and FSS. Ser37 and Thr59 together coordinate Mg(2+).

The protein belongs to the TRAFAC class TrmE-Era-EngA-EngB-Septin-like GTPase superfamily. EngB GTPase family. The cofactor is Mg(2+).

Its function is as follows. Necessary for normal cell division and for the maintenance of normal septation. This Bacillus mycoides (strain KBAB4) (Bacillus weihenstephanensis) protein is Probable GTP-binding protein EngB.